Consider the following 576-residue polypeptide: Arginine--tRNA ligase (576 aa).

The 'HIGH' region motif lies at 122 to 132 (PNVAKEMHVGH).

This sequence belongs to the class-I aminoacyl-tRNA synthetase family. Monomer.

The protein resides in the cytoplasm. The catalysed reaction is tRNA(Arg) + L-arginine + ATP = L-arginyl-tRNA(Arg) + AMP + diphosphate. The protein is Arginine--tRNA ligase of Thermobifida fusca (strain YX).